A 261-amino-acid chain; its full sequence is MRLPEQPGEGKPENEKKGDGGALGGGEEPPRSQAPDFPTWEKMPFHHVTAGLLYKGNYLNRSLSAGSDSEQLANISVEELDEIREAFRVLDRDGNGFISKQELGMAMRSLGYMPSEVELAIIMQRLDMDGDGQVDFDEFMTILGPKLVSSEGRDGFLGNTIDSIFWQFDMQRITLEELKHILYHAFRDHLTMKDIENIIINEEESLNETSGNCQTEFEGVHSQKQNRQTCVRKSLICAFAMAFIISVMLIAANQILRSGME.

The segment at 1–39 is disordered; that stretch reads MRLPEQPGEGKPENEKKGDGGALGGGEEPPRSQAPDFPT. Residues 1 to 234 are Cytoplasmic-facing; sequence MRLPEQPGEG…QNRQTCVRKS (234 aa). Residues 8–19 are compositionally biased toward basic and acidic residues; sequence GEGKPENEKKGD. EF-hand domains follow at residues 78–113 and 114–149; these read EELD…LGYM and PSEV…KLVS. Ca(2+) contacts are provided by aspartate 91, aspartate 93, asparagine 95, glutamate 102, aspartate 127, aspartate 129, aspartate 131, glutamine 133, and glutamate 138. Residues 235–255 form a helical; Anchor for type IV membrane protein membrane-spanning segment; that stretch reads LICAFAMAFIISVMLIAANQI. The Extracellular portion of the chain corresponds to 256–261; the sequence is LRSGME.

In terms of assembly, interacts with PI4KB. This binding competes with FREQ/NCS1 binding in a calcium-dependent manner. Brain specific.

The protein localises to the golgi apparatus. The protein resides in the trans-Golgi network membrane. It localises to the cytoplasm. Its subcellular location is the perinuclear region. It is found in the cell membrane. Negatively regulates Golgi-to-plasma membrane trafficking by interacting with PI4KB and inhibiting its activity. May play a role in the physiology of neurons and is potentially important in memory and learning. This is Calcium-binding protein 8 (CALN1) from Homo sapiens (Human).